Consider the following 333-residue polypeptide: Photosystem II assembly protein Ycf48 (333 aa).

A signal peptide spans M1 to R25.

Belongs to the Ycf48 family. Part of early PSII assembly complexes which includes D1 (psbA) and PsbI; not found in mature PSII. Binds to the lumenal side of PSII complexes. Interacts with YidC.

It is found in the cellular thylakoid lumen. In terms of biological role, a factor required for optimal assembly of photosystem II (PSII), acting in the early stages of PSII assembly. Also plays a role in replacement of photodamaged D1 (psbA). Assists YidC in synthesis of chlorophyll-binding proteins. The polypeptide is Photosystem II assembly protein Ycf48 (Synechococcus sp. (strain JA-2-3B'a(2-13)) (Cyanobacteria bacterium Yellowstone B-Prime)).